A 2181-amino-acid chain; its full sequence is Non-reducing polyketide synthase subA (2181 aa).

The tract at residues Gln-74–Asp-180 is N-terminal acylcarrier protein transacylase domain (SAT). The region spanning Gln-347 to Gln-779 is the Ketosynthase family 3 (KS3) domain. Residues Cys-525, His-661, and His-702 each act as for beta-ketoacyl synthase activity in the active site. The interval Val-891–Pro-1193 is malonyl-CoA:ACP transacylase (MAT) domain. Catalysis depends on Ser-977, which acts as the For acyl/malonyl transferase activity. Positions Val-1269 to Ser-1401 are N-terminal hotdog fold. One can recognise a PKS/mFAS DH domain in the interval Val-1269–Lys-1579. The interval Gln-1276–Ile-1573 is product template (PT) domain. The segment at Ser-1425–Lys-1579 is C-terminal hotdog fold. The interval Ile-1652–Met-1673 is disordered. Residues Ser-1653 to Ser-1670 show a composition bias toward low complexity. In terms of domain architecture, Carrier spans Glu-1677 to Gln-1753. Ser-1713 bears the O-(pantetheine 4'-phosphoryl)serine mark. The segment at Glu-1982 to Thr-2164 is methyltransferase (CMeT) domain.

Its pathway is secondary metabolite biosynthesis; terpenoid biosynthesis. Its function is as follows. Non-reducing polyketide synthase; part of the gene cluster that mediates the biosynthesis of the immunosuppressants subglutinols, meroterpenoids consisting of an alpha-pyrone (4-hydroxy-5,6-dimethyl-2-pyrone) moiety attached to a decalin core fused to a five-membered cyclic ether carrying a prenylside chain. The first step of the pathway is the synthesis of the alpha-pyrone moiety by the polyketide synthase subA via condensation of one acetyl-CoA starter unit with 3 malonyl-CoA units and 2 methylations. The alpha-pyrone is then combined with geranylgeranyl pyrophosphate (GGPP) formed by the GGPP synthase subD through the action of the prenyltransferase subC to yield a linear alpha-pyrone diterpenoid. Subsequent steps in the subglutinol biosynthetic pathway involve the decalin core formation, which is thought to be initiated by the epoxidation of the C10-C11 olefin by the FAD-dependent oxidoreductase subE. The following cyclization cascade would be catalyzed by the terpene cyclase subB. Lastly, the FAD-dependent dehydrogenase subF probably catalyzes the five-membered cyclic ether formation to complete the formation of subglutinol A. Subsequent redox reactions appear to give rise to subglutinol C and D, however, it remains unclear which enzymes are responsible for these transformations. SubD may have secondary function in the conversion of the identified subglutinols to subglutinol analog 45, which seems to be the major product of the cluster. The sequence is that of Non-reducing polyketide synthase subA from Metarhizium robertsii (strain ARSEF 23 / ATCC MYA-3075) (Metarhizium anisopliae (strain ARSEF 23)).